We begin with the raw amino-acid sequence, 390 residues long: Queuine tRNA-ribosyltransferase (390 aa).

The active-site Proton acceptor is D92. Residues 92–96, D146, Q195, and G222 each bind substrate; that span reads DSGGF. The RNA binding stretch occupies residues 253 to 259; it reads GVGTPED. D272 acts as the Nucleophile in catalysis. The interval 277–281 is RNA binding; important for wobble base 34 recognition; the sequence is TRNAR. Residues C310, C312, C315, and H354 each coordinate Zn(2+).

This sequence belongs to the queuine tRNA-ribosyltransferase family. As to quaternary structure, homodimer. Within each dimer, one monomer is responsible for RNA recognition and catalysis, while the other monomer binds to the replacement base PreQ1. It depends on Zn(2+) as a cofactor.

It carries out the reaction 7-aminomethyl-7-carbaguanine + guanosine(34) in tRNA = 7-aminomethyl-7-carbaguanosine(34) in tRNA + guanine. It participates in tRNA modification; tRNA-queuosine biosynthesis. Its function is as follows. Catalyzes the base-exchange of a guanine (G) residue with the queuine precursor 7-aminomethyl-7-deazaguanine (PreQ1) at position 34 (anticodon wobble position) in tRNAs with GU(N) anticodons (tRNA-Asp, -Asn, -His and -Tyr). Catalysis occurs through a double-displacement mechanism. The nucleophile active site attacks the C1' of nucleotide 34 to detach the guanine base from the RNA, forming a covalent enzyme-RNA intermediate. The proton acceptor active site deprotonates the incoming PreQ1, allowing a nucleophilic attack on the C1' of the ribose to form the product. After dissociation, two additional enzymatic reactions on the tRNA convert PreQ1 to queuine (Q), resulting in the hypermodified nucleoside queuosine (7-(((4,5-cis-dihydroxy-2-cyclopenten-1-yl)amino)methyl)-7-deazaguanosine). The chain is Queuine tRNA-ribosyltransferase from Verminephrobacter eiseniae (strain EF01-2).